Consider the following 481-residue polypeptide: Aspartyl/glutamyl-tRNA(Asn/Gln) amidotransferase subunit B (481 aa).

It belongs to the GatB/GatE family. GatB subfamily. As to quaternary structure, heterotrimer of A, B and C subunits.

It catalyses the reaction L-glutamyl-tRNA(Gln) + L-glutamine + ATP + H2O = L-glutaminyl-tRNA(Gln) + L-glutamate + ADP + phosphate + H(+). It carries out the reaction L-aspartyl-tRNA(Asn) + L-glutamine + ATP + H2O = L-asparaginyl-tRNA(Asn) + L-glutamate + ADP + phosphate + 2 H(+). In terms of biological role, allows the formation of correctly charged Asn-tRNA(Asn) or Gln-tRNA(Gln) through the transamidation of misacylated Asp-tRNA(Asn) or Glu-tRNA(Gln) in organisms which lack either or both of asparaginyl-tRNA or glutaminyl-tRNA synthetases. The reaction takes place in the presence of glutamine and ATP through an activated phospho-Asp-tRNA(Asn) or phospho-Glu-tRNA(Gln). This Ectopseudomonas mendocina (strain ymp) (Pseudomonas mendocina) protein is Aspartyl/glutamyl-tRNA(Asn/Gln) amidotransferase subunit B.